We begin with the raw amino-acid sequence, 798 residues long: Integrin beta-1 (798 aa).

Positions 1 to 20 are cleaved as a signal peptide; it reads MNLQLIFWIGLISSVCCVFG. Residues 21–728 lie on the Extracellular side of the membrane; it reads QADENRCLKA…ETPECPTGPD (708 aa). Positions 26-76 constitute a PSI domain; it reads RCLKANAKSCGECIQAGPNCGWCTNSTFLQEGMPTSARCDDLEALKKKGCH. Intrachain disulfides connect Cys27-Cys45, Cys35-Cys464, Cys38-Cys64, Cys48-Cys75, Cys207-Cys213, Cys261-Cys301, Cys401-Cys415, Cys435-Cys462, Cys466-Cys486, Cys477-Cys489, Cys491-Cys500, Cys502-Cys533, Cys516-Cys531, Cys525-Cys536, Cys538-Cys553, Cys555-Cys576, Cys560-Cys574, Cys568-Cys579, Cys581-Cys590, Cys592-Cys615, Cys599-Cys613, Cys607-Cys618, Cys620-Cys630, Cys633-Cys636, Cys640-Cys691, Cys646-Cys665, Cys649-Cys661, and Cys699-Cys723. Residue Asn50 is glycosylated (N-linked (GlcNAc...) asparagine). A compositionally biased stretch (basic and acidic residues) spans 75–91; it reads CHPNDIENPRGSKDIKK. Residues 75-105 form a disordered region; sequence CHPNDIENPRGSKDIKKNKNVTNRSKGTAEK. 2 N-linked (GlcNAc...) asparagine glycosylation sites follow: Asn94 and Asn97. The VWFA domain maps to 140-378; that stretch reads DYPIDLYYLM…QLIIDAYNSL (239 aa). Mg(2+) is bound by residues Ser152 and Ser154. Ca(2+) contacts are provided by Ser154, Asp157, Asp158, and Glu189. The tract at residues 207–213 is CX3CL1-binding; that stretch reads CTNEQNC. Asn212 carries N-linked (GlcNAc...) asparagine glycosylation. Residues Asn244, Asp246, Pro248, and Glu249 each contribute to the Ca(2+) site. Residue Glu249 coordinates Mg(2+). An N-linked (GlcNAc...) asparagine glycan is attached at Asn269. Positions 295 to 314 are CX3CL1-binding; that stretch reads LPNDGQCHLENDVYTMSHYY. Ala362 contacts Ca(2+). Asn363, Asn406, and Asn417 each carry an N-linked (GlcNAc...) asparagine glycan. Residues 383 to 465 form an interaction with TMEM182 region; it reads ILENSKLPEG…IILQFICECE (83 aa). I-EGF domains are found at residues 466 to 501, 502 to 554, 555 to 591, and 592 to 631; these read CQGE…RHCE, CSTD…KFCE, CDNF…SACD, and CSLD…PTCE. Asn481 carries N-linked (GlcNAc...) asparagine glycosylation. A glycan (N-linked (GlcNAc...) asparagine) is linked at Asn520. Asn584 carries an N-linked (GlcNAc...) asparagine glycan. A glycan (N-linked (GlcNAc...) asparagine) is linked at Asn669. Residues 729 to 749 form a helical membrane-spanning segment; the sequence is IIPIVAGVVAGIVLIGLALLL. Residues 750–798 are Cytoplasmic-facing; sequence IWKLLMIIHDRREFAKFEKEKMNAKWDTGENPIYKSAVTTVVNPKYEGK. The interval 762 to 767 is signal for sorting from recycling endosomes; interaction with ACAP1; the sequence is EFAKFE. Phosphothreonine is present on Thr777. Tyr783 carries the post-translational modification Phosphotyrosine. Ser785 carries the phosphoserine modification. Residues 785-792 are interaction with ITGB1BP1; it reads SAVTTVVN. Residue Thr789 is modified to Phosphothreonine. An N6-acetyllysine; alternate modification is found at Lys794. Lys794 is covalently cross-linked (Glycyl lysine isopeptide (Lys-Gly) (interchain with G-Cter in SUMO1); alternate).

The protein belongs to the integrin beta chain family. In terms of assembly, interacts with seprase FAP (seprase); the interaction occurs at the cell surface of invadopodia membrane in a collagen-dependent manner. Heterodimer of an alpha and a beta subunit. Beta-1 associates with either alpha-1, alpha-2, alpha-3, alpha-4, alpha-5, alpha-6, alpha-7, alpha-8, alpha-9, alpha-10, alpha-11 or alpha-V. ITGA6:ITGB1 is found in a complex with CD9; interaction takes place in oocytes and is involved in sperm-egg fusion. Binds LGALS3BP and NMRK2, when associated with alpha-7, but not with alpha-5. Interacts with FLNB, FLNC and RANBP9. Interacts with KRT1 in the presence of RACK1 and SRC. Interacts with JAML; integrin alpha-4/beta-1 may regulate leukocyte to endothelial cells adhesion by controlling JAML homodimerization. Interacts with RAB21. Interacts (via the cytoplasmic region) with RAB25 (via the hypervariable C-terminal region). Interacts with MYO10. Interacts with ITGB1BP1 (via C-terminal region); the interaction is a prerequisite for focal adhesion disassembly. Interacts with TLN1; the interaction is prevented by competitive binding of ITGB1BP1. Interacts with ACAP1; required for ITGB1 recycling. Interacts with ASAP3. Interacts with FERMT2; the interaction is inhibited in presence of ITGB1BP1. Interacts with DAB2. Interacts with FGR and HCK. Interacts with EMP2; the interaction may be direct or indirect and ITGB1 has a heterodimer form. ITGA5:ITGB1 interacts with CCN3. ITGA4:ITGB1 is found in a ternary complex with CX3CR1 and CX3CL1. ITGA5:ITGB1 interacts with FBN1. ITGA5:ITGB1 interacts with IL1B. Interacts with MDK. ITGA4:ITGB1 interacts with MDK; this interaction mediates MDK-induced osteoblast cells migration through PXN phosphorylation. ITGA6:ITGB1 interacts with MDK; this interaction mediates MDK-induced neurite-outgrowth. ITGA5:ITGB1 interacts with ACE2. Interacts with TMEM182 and LAMB1. Interacts with tensin TNS3; TNS3 also interacts with PEAK1, thus acting as an adapter molecule to bridge the association of PEAK1 with ITGB1. Interacts with tensin TNS4; the interaction displaces tensin TNS3 from the ITGB1 cytoplasmic tail and promotes ITGB1 stability. Integrin ITGA9:ITGB1 interacts with SPP1/OPN (via N-terminus). Integrin ITGA9:ITGB1 interacts with TNC/TNFN3 (via the 3rd Fibronectin type-III domain). Integrins ITGA4:ITGB1 and ITGA9:ITGB1 interact with SVEP1 (via Sushi domain 21); thereby inhibit Ca(2+) intracellular signaling and as a result repress vasocontraction. ITGA4:ITGB1 and ITGA5:ITGB1 interacts with SELP. Interacts with CD248. ITGA5:ITGB1 interacts with IGFBP1. ITGA4:ITGB1 interacts with BCAM. Interacts with ADGRG6. Interacts with the C-terminal region of FLNC. Interacts with filamin FLNA isoform 3/VAR-1. As to quaternary structure, interacts with ACE2. Interacts with alpha-7B in cardiomyocytes of adult heart and alpha-7A and alpha-7B in adult skeletal muscle. Interacts with filamin FLNA isoform 3/VAR-1.

Its subcellular location is the cell membrane. The protein localises to the cell projection. It localises to the invadopodium membrane. It is found in the ruffle membrane. The protein resides in the recycling endosome. Its subcellular location is the melanosome. The protein localises to the lamellipodium. It localises to the ruffle. It is found in the cell junction. The protein resides in the focal adhesion. Its subcellular location is the sarcolemma. Functionally, integrins alpha-1/beta-1, alpha-2/beta-1, alpha-10/beta-1 and alpha-11/beta-1 are receptors for collagen. Integrins alpha-1/beta-1 and alpha-2/beta-2 recognize the proline-hydroxylated sequence G-F-P-G-E-R in collagen. Integrins alpha-2/beta-1, alpha-3/beta-1, alpha-4/beta-1, alpha-5/beta-1, alpha-8/beta-1, alpha-10/beta-1, alpha-11/beta-1 and alpha-V/beta-1 are receptors for fibronectin. Alpha-4/beta-1 recognizes one or more domains within the alternatively spliced CS-1 and CS-5 regions of fibronectin. Integrin alpha-5/beta-1 is a receptor for fibrinogen. Integrin alpha-1/beta-1, alpha-2/beta-1, alpha-6/beta-1 and alpha-7/beta-1 are receptors for lamimin. Integrin alpha-6/beta-1 (ITGA6:ITGB1) is present in oocytes and is involved in sperm-egg fusion. Integrin alpha-4/beta-1 is a receptor for VCAM1 and recognizes the sequence Q-I-D-S in VCAM1. Integrin alpha-9/beta-1 is a receptor for VCAM1, cytotactin and osteopontin. It recognizes the sequence A-E-I-D-G-I-E-L in cytotactin. Integrin alpha-3/beta-1 is a receptor for epiligrin, thrombospondin and CSPG4. Integrin alpha-3/beta-1 provides a docking site for FAP (seprase) at invadopodia plasma membranes in a collagen-dependent manner and hence may participate in the adhesion, formation of invadopodia and matrix degradation processes, promoting cell invasion. Alpha-3/beta-1 may mediate with LGALS3 the stimulation by CSPG4 of endothelial cells migration. Integrin alpha-V/beta-1 is a receptor for vitronectin. Beta-1 integrins recognize the sequence R-G-D in a wide array of ligands. When associated with alpha-7/beta-1 integrin, regulates cell adhesion and laminin matrix deposition. Involved in promoting endothelial cell motility and angiogenesis. Involved in osteoblast compaction through the fibronectin fibrillogenesis cell-mediated matrix assembly process and the formation of mineralized bone nodules. May be involved in up-regulation of the activity of kinases such as PKC via binding to KRT1. Together with KRT1 and RACK1, serves as a platform for SRC activation or inactivation. Plays a mechanistic adhesive role during telophase, required for the successful completion of cytokinesis. ITGA4:ITGB1 binds to fractalkine (CX3CL1) and may act as its coreceptor in CX3CR1-dependent fractalkine signaling. ITGA4:ITGB1 and ITGA5:ITGB1 bind to PLA2G2A via a site (site 2) which is distinct from the classical ligand-binding site (site 1) and this induces integrin conformational changes and enhanced ligand binding to site 1. ITGA5:ITGB1 acts as a receptor for fibrillin-1 (FBN1) and mediates R-G-D-dependent cell adhesion to FBN1. ITGA5:ITGB1 acts as a receptor for fibronectin FN1 and mediates R-G-D-dependent cell adhesion to FN1. ITGA5:ITGB1 is a receptor for IL1B and binding is essential for IL1B signaling. ITGA5:ITGB3 is a receptor for soluble CD40LG and is required for CD40/CD40LG signaling. Plays an important role in myoblast differentiation and fusion during skeletal myogenesis. ITGA9:ITGB1 may play a crucial role in SVEP1/polydom-mediated myoblast cell adhesion. Integrins ITGA9:ITGB1 and ITGA4:ITGB1 repress PRKCA-mediated L-type voltage-gated channel Ca(2+) influx and ROCK-mediated calcium sensitivity in vascular smooth muscle cells via their interaction with SVEP1, thereby inhibit vasocontraction. The chain is Integrin beta-1 (ITGB1) from Bos taurus (Bovine).